Here is a 177-residue protein sequence, read N- to C-terminus: Large ribosomal subunit protein uL6 (177 aa).

The protein belongs to the universal ribosomal protein uL6 family. Part of the 50S ribosomal subunit.

Its function is as follows. This protein binds to the 23S rRNA, and is important in its secondary structure. It is located near the subunit interface in the base of the L7/L12 stalk, and near the tRNA binding site of the peptidyltransferase center. The protein is Large ribosomal subunit protein uL6 of Methylococcus capsulatus (strain ATCC 33009 / NCIMB 11132 / Bath).